A 312-amino-acid chain; its full sequence is Malate dehydrogenase (312 aa).

NAD(+) contacts are provided by residues 7–13 (GAAGGIG) and D34. Substrate is bound by residues R81 and R87. NAD(+)-binding positions include N94 and 117-119 (ITN). Residues N119 and R153 each contribute to the substrate site. Residue H177 is the Proton acceptor of the active site. M227 serves as a coordination point for NAD(+).

The protein belongs to the LDH/MDH superfamily. MDH type 1 family. As to quaternary structure, homodimer.

The catalysed reaction is (S)-malate + NAD(+) = oxaloacetate + NADH + H(+). Functionally, catalyzes the reversible oxidation of malate to oxaloacetate. This Yersinia pseudotuberculosis serotype O:1b (strain IP 31758) protein is Malate dehydrogenase.